A 265-amino-acid polypeptide reads, in one-letter code: Putative cysteine-rich receptor-like protein kinase At4g11521 (265 aa).

The signal sequence occupies residues 1–23; the sequence is MMLNTLFLPIFLFFLITFDYVST. Gnk2-homologous domains lie at 24-122 and 128-241; these read QTCF…NISF and MEPS…LYPF. 3 N-linked (GlcNAc...) asparagine glycosylation sites follow: Asn34, Asn102, and Asn119. A glycan (N-linked (GlcNAc...) asparagine) is linked at Asn247.

Belongs to the protein kinase superfamily. Ser/Thr protein kinase family. CRK subfamily.

Its subcellular location is the secreted. The protein is Putative cysteine-rich receptor-like protein kinase At4g11521 of Arabidopsis thaliana (Mouse-ear cress).